Here is a 198-residue protein sequence, read N- to C-terminus: NAD(P)H dehydrogenase (quinone) (198 aa).

The region spanning 4–189 (ILVLYYSMYG…SIARYQGEYV (186 aa)) is the Flavodoxin-like domain. FMN contacts are provided by residues 10–15 (SMYGHI) and 78–80 (TRF). Tyr12 contacts NAD(+). Trp98 contacts substrate. Residues 113–118 (STGTGG) and His133 contribute to the FMN site.

Belongs to the WrbA family. FMN serves as cofactor.

It carries out the reaction a quinone + NADH + H(+) = a quinol + NAD(+). The enzyme catalyses a quinone + NADPH + H(+) = a quinol + NADP(+). The polypeptide is NAD(P)H dehydrogenase (quinone) (Salmonella typhi).